The primary structure comprises 282 residues: Prohibitin-1 (282 aa).

An AIM motif is present at residues 106-109; sequence YQNL.

This sequence belongs to the prohibitin family. The mitochondrial prohibitin complex consists of two subunits (phb1 and phb2). The subunits assemble into a membrane-associated ring-shaped supercomplex of approximately 1 mDa.

It is found in the mitochondrion inner membrane. It localises to the cytoplasm. Functionally, prohibitin probably acts as a holdase/unfoldase for the stabilization of newly synthesized mitochondrial proteins. Involved in mitophagy; may act as an adapter for atg8 that supports mitophagosome assembly. Negatively regulates the proteolytic processing of atg32 via the i-AAA protease. Acts as a negative regulator of the m-AAA protease. The chain is Prohibitin-1 (phb1) from Schizosaccharomyces pombe (strain 972 / ATCC 24843) (Fission yeast).